We begin with the raw amino-acid sequence, 264 residues long: tRNA (guanine-N(1)-)-methyltransferase (264 aa).

S-adenosyl-L-methionine is bound by residues glycine 125 and 145-150; that span reads LGDFVL.

It belongs to the RNA methyltransferase TrmD family. As to quaternary structure, homodimer.

The protein resides in the cytoplasm. The catalysed reaction is guanosine(37) in tRNA + S-adenosyl-L-methionine = N(1)-methylguanosine(37) in tRNA + S-adenosyl-L-homocysteine + H(+). Functionally, specifically methylates guanosine-37 in various tRNAs. The polypeptide is tRNA (guanine-N(1)-)-methyltransferase (Burkholderia ambifaria (strain MC40-6)).